The primary structure comprises 301 residues: GTP cyclohydrolase FolE2 (301 aa).

It belongs to the GTP cyclohydrolase IV family.

The catalysed reaction is GTP + H2O = 7,8-dihydroneopterin 3'-triphosphate + formate + H(+). It functions in the pathway cofactor biosynthesis; 7,8-dihydroneopterin triphosphate biosynthesis; 7,8-dihydroneopterin triphosphate from GTP: step 1/1. Converts GTP to 7,8-dihydroneopterin triphosphate. The chain is GTP cyclohydrolase FolE2 from Pseudomonas syringae pv. tomato (strain ATCC BAA-871 / DC3000).